Consider the following 500-residue polypeptide: L-arabinose isomerase (500 aa).

Residues Glu306, Glu333, His349, and His448 each coordinate Mn(2+).

The protein belongs to the arabinose isomerase family. It depends on Mn(2+) as a cofactor.

It carries out the reaction beta-L-arabinopyranose = L-ribulose. It participates in carbohydrate degradation; L-arabinose degradation via L-ribulose; D-xylulose 5-phosphate from L-arabinose (bacterial route): step 1/3. Catalyzes the conversion of L-arabinose to L-ribulose. This Cellvibrio japonicus (strain Ueda107) (Pseudomonas fluorescens subsp. cellulosa) protein is L-arabinose isomerase.